Consider the following 124-residue polypeptide: Small ribosomal subunit protein uS12 (124 aa).

Asp-89 is modified (3-methylthioaspartic acid). A disordered region spans residues 103–124 (DTAGVQNRNRGRSKYGAKRPKK). Positions 111–124 (NRGRSKYGAKRPKK) are enriched in basic residues.

Belongs to the universal ribosomal protein uS12 family. As to quaternary structure, part of the 30S ribosomal subunit. Contacts proteins S8 and S17. May interact with IF1 in the 30S initiation complex.

Its function is as follows. With S4 and S5 plays an important role in translational accuracy. In terms of biological role, interacts with and stabilizes bases of the 16S rRNA that are involved in tRNA selection in the A site and with the mRNA backbone. Located at the interface of the 30S and 50S subunits, it traverses the body of the 30S subunit contacting proteins on the other side and probably holding the rRNA structure together. The combined cluster of proteins S8, S12 and S17 appears to hold together the shoulder and platform of the 30S subunit. The sequence is that of Small ribosomal subunit protein uS12 from Desulforudis audaxviator (strain MP104C).